A 356-amino-acid polypeptide reads, in one-letter code: uncharacterized protein (356 aa).

Transmembrane regions (helical) follow at residues 2–22, 35–55, 76–96, 99–119, 124–144, and 152–172; these read IESI…FHRL, GYVT…PIPF, NMGY…FAFG, LLYG…GPFL, IVAL…LSIF, and EIAF…ITFV. A GGDEF domain is found at 218–353; sequence ESLALLLIDI…GRNQVMFNPI (136 aa).

It is found in the cell membrane. This is an uncharacterized protein from Staphylococcus haemolyticus (strain JCSC1435).